The sequence spans 382 residues: 26S proteasome non-ATPase regulatory subunit 6 (382 aa).

Residues Gln186 to Ala354 enclose the PCI domain.

The protein belongs to the proteasome subunit S10 family.

Acts as a regulatory subunit of the 26S proteasome which is involved in the ATP-dependent degradation of ubiquitinated proteins. The sequence is that of 26S proteasome non-ATPase regulatory subunit 6 (psmD6) from Dictyostelium discoideum (Social amoeba).